The following is a 256-amino-acid chain: MEGKPRVKVVLLDIEGTVCPISFVKDILFPYALAALPETLSTQWDSPSFLPYRSAFPPEHASTPDALLSHVRDLMAQDLKIPYLKSLQGYLWLRGYESGELKCPLFPDVYPALKKWRDNGAKICIYSSGSVAAQKLLWRYTTEGDLRSCIWNGLEGDDGRELEGGYWDTVNAGLKQHMASYEKIAKANSALGEVGEWLFLSDNIKEVRAAREAGMKSFVVVREGNAEVTAEEREGQVLVESFAEVEKWVEVTADKA.

Residues Asp13 and Glu15 each coordinate Mg(2+). Substrate is bound by residues 127–128 and Lys175; that span reads SS. Asp202 contacts Mg(2+).

This sequence belongs to the HAD-like hydrolase superfamily. MasA/MtnC family. Monomer. Requires Mg(2+) as cofactor.

It is found in the cytoplasm. The protein localises to the nucleus. The enzyme catalyses 5-methylsulfanyl-2,3-dioxopentyl phosphate + H2O = 1,2-dihydroxy-5-(methylsulfanyl)pent-1-en-3-one + phosphate. It participates in amino-acid biosynthesis; L-methionine biosynthesis via salvage pathway; L-methionine from S-methyl-5-thio-alpha-D-ribose 1-phosphate: step 3/6. Its pathway is amino-acid biosynthesis; L-methionine biosynthesis via salvage pathway; L-methionine from S-methyl-5-thio-alpha-D-ribose 1-phosphate: step 4/6. Functionally, bifunctional enzyme that catalyzes the enolization of 2,3-diketo-5-methylthiopentyl-1-phosphate (DK-MTP-1-P) into the intermediate 2-hydroxy-3-keto-5-methylthiopentenyl-1-phosphate (HK-MTPenyl-1-P), which is then dephosphorylated to form the acireductone 1,2-dihydroxy-3-keto-5-methylthiopentene (DHK-MTPene). The protein is Enolase-phosphatase E1 (utr4) of Botryotinia fuckeliana (strain B05.10) (Noble rot fungus).